The following is a 473-amino-acid chain: High-affinity proline transporter PutP (473 aa).

Helical transmembrane passes span 32–52 (LSAGAADMSGWLLMGLPGAMF), 56–76 (LSGAWIVIGLCLGAWANWLYV), 114–134 (IVILVFFTFYVSSGMVSGGVL), 146–166 (GLWIVTGVVVAYTLFGGFLAV), 171–191 (FVQGIIMFAALILVPIVTFFH), 218–238 (VLGIISLFAWGLGYFGQPHII), 256–276 (IGMGWMILSAVGAVLTGLGGI), 299–319 (ILFHPIITGFLISAILAAIMS), 350–370 (LVFLGRLAVLAVSIVALVLAW), 376–396 (ILGLVSYAWAGFGASFGPVVL), 408–428 (GALAGMIVGAATVIIWANAGL), and 431–451 (FLYEMIPGFAASLLSVFFVSI).

This sequence belongs to the sodium:solute symporter (SSF) (TC 2.A.21) family.

The protein resides in the cell membrane. It carries out the reaction L-proline(in) + Na(+)(in) = L-proline(out) + Na(+)(out). In terms of biological role, catalyzes the high-affinity uptake of extracellular proline. Important for the use of proline as a sole carbon and energy source or a sole nitrogen source. The polypeptide is High-affinity proline transporter PutP (Bacillus subtilis (strain 168)).